A 495-amino-acid chain; its full sequence is Lysine--tRNA ligase (495 aa).

Positions 406 and 413 each coordinate Mg(2+).

This sequence belongs to the class-II aminoacyl-tRNA synthetase family. In terms of assembly, homodimer. Requires Mg(2+) as cofactor.

The protein localises to the cytoplasm. The catalysed reaction is tRNA(Lys) + L-lysine + ATP = L-lysyl-tRNA(Lys) + AMP + diphosphate. This Staphylococcus aureus (strain COL) protein is Lysine--tRNA ligase.